The following is a 164-amino-acid chain: Mediator of RNA polymerase II transcription subunit 21 (164 aa).

Residues 49–81 (APLPANQTQQGSTLGSNRQTVSPSTQAEAESNF) form a disordered region. Polar residues predominate over residues 53–81 (ANQTQQGSTLGSNRQTVSPSTQAEAESNF). Residues 114 to 146 (ESQLKIIDDLSKELQSVEQEQVKKIQEKDKLLK) are a coiled coil.

Belongs to the Mediator complex subunit 21 family. Component of the Mediator complex.

Its subcellular location is the nucleus. Functionally, component of the Mediator complex, a coactivator involved in the regulated transcription of nearly all RNA polymerase II-dependent genes. Mediator functions as a bridge to convey information from gene-specific regulatory proteins to the basal RNA polymerase II transcription machinery. Mediator is recruited to promoters by direct interactions with regulatory proteins and serves as a scaffold for the assembly of a functional preinitiation complex with RNA polymerase II and the general transcription factors. The sequence is that of Mediator of RNA polymerase II transcription subunit 21 (SRB7) from Scheffersomyces stipitis (strain ATCC 58785 / CBS 6054 / NBRC 10063 / NRRL Y-11545) (Yeast).